A 680-amino-acid polypeptide reads, in one-letter code: UvrABC system protein B (680 aa).

The region spanning S27–G192 is the Helicase ATP-binding domain. G40–T47 contacts ATP. The short motif at Y93 to I116 is the Beta-hairpin element. The Helicase C-terminal domain occupies Q432 to V594. A UVR domain is found at A637–H672.

It belongs to the UvrB family. Forms a heterotetramer with UvrA during the search for lesions. Interacts with UvrC in an incision complex.

The protein resides in the cytoplasm. In terms of biological role, the UvrABC repair system catalyzes the recognition and processing of DNA lesions. A damage recognition complex composed of 2 UvrA and 2 UvrB subunits scans DNA for abnormalities. Upon binding of the UvrA(2)B(2) complex to a putative damaged site, the DNA wraps around one UvrB monomer. DNA wrap is dependent on ATP binding by UvrB and probably causes local melting of the DNA helix, facilitating insertion of UvrB beta-hairpin between the DNA strands. Then UvrB probes one DNA strand for the presence of a lesion. If a lesion is found the UvrA subunits dissociate and the UvrB-DNA preincision complex is formed. This complex is subsequently bound by UvrC and the second UvrB is released. If no lesion is found, the DNA wraps around the other UvrB subunit that will check the other stand for damage. This Nitratidesulfovibrio vulgaris (strain DSM 19637 / Miyazaki F) (Desulfovibrio vulgaris) protein is UvrABC system protein B.